Consider the following 158-residue polypeptide: Phosphopantetheine adenylyltransferase (158 aa).

Serine 8 is a binding site for substrate. ATP contacts are provided by residues 8-9 (SF) and histidine 16. Substrate is bound by residues lysine 40, threonine 72, and arginine 86. ATP is bound by residues 87-89 (GLR), glutamate 97, and 122-128 (HSFLSSS).

It belongs to the bacterial CoaD family. In terms of assembly, homohexamer. Mg(2+) serves as cofactor.

The protein resides in the cytoplasm. The catalysed reaction is (R)-4'-phosphopantetheine + ATP + H(+) = 3'-dephospho-CoA + diphosphate. The protein operates within cofactor biosynthesis; coenzyme A biosynthesis; CoA from (R)-pantothenate: step 4/5. Reversibly transfers an adenylyl group from ATP to 4'-phosphopantetheine, yielding dephospho-CoA (dPCoA) and pyrophosphate. This is Phosphopantetheine adenylyltransferase from Prochlorococcus marinus (strain NATL2A).